Here is a 356-residue protein sequence, read N- to C-terminus: Glucan endo-1,3-beta-glucosidase, acidic isoform GL153 (356 aa).

The signal sequence occupies residues 1-29 (MALCIKNGFLAAALVLVGLLMCSIQMIGA). Glutamine 30 is subject to Pyrrolidone carboxylic acid. A glycan (N-linked (GlcNAc...) asparagine) is linked at asparagine 95. Glutamate 124 functions as the Proton donor in the catalytic mechanism. Glutamate 264 serves as the catalytic Nucleophile.

The protein belongs to the glycosyl hydrolase 17 family. In terms of tissue distribution, is expressed primarily in epidermal cell of healthy plant, and following induction by ethylene, accumulates in mesophyll cells.

It is found in the secreted. The protein resides in the extracellular space. The catalysed reaction is Hydrolysis of (1-&gt;3)-beta-D-glucosidic linkages in (1-&gt;3)-beta-D-glucans.. Is thought to be an important plant defense-related product against fungal pathogens. In Nicotiana tabacum (Common tobacco), this protein is Glucan endo-1,3-beta-glucosidase, acidic isoform GL153 (GGL4).